The sequence spans 21 residues: Major outer membrane protein (21 aa).

In terms of assembly, disulfide bond interactions within and between MOMP molecules and other components form high molecular-weight oligomers.

Its subcellular location is the cell outer membrane. Structural rigidity of the outer membrane of elementary bodies and porin forming, permitting diffusion of solutes through the intracellular reticulate body membrane. This is Major outer membrane protein from Actinobacillus suis.